The following is a 300-amino-acid chain: Meiotically up-regulated gene 165 protein (300 aa).

Disordered regions lie at residues 1–38 and 50–109; these read MLEKGEHIEYPNTPPLHSPPESHTFSSQTDDSYFHKPS and TNSS…STLE. Polar residues predominate over residues 21 to 38; the sequence is ESHTFSSQTDDSYFHKPS. Positions 52-69 are enriched in low complexity; the sequence is SSVPSASRSPESIASSQS. The span at 94 to 103 shows a compositional bias: basic residues; it reads TLRKRGRKPK.

Its subcellular location is the nucleus. Has a role in meiosis. This chain is Meiotically up-regulated gene 165 protein (mug165), found in Schizosaccharomyces pombe (strain 972 / ATCC 24843) (Fission yeast).